Reading from the N-terminus, the 109-residue chain is Ribulose bisphosphate carboxylase small subunit (109 aa).

It belongs to the RuBisCO small chain family. In terms of assembly, heterohexadecamer of 8 large and 8 small subunits. Forms complexes of many stoichiometries with Raf1 and RbcL.

The protein resides in the carboxysome. Functionally, ruBisCO catalyzes two reactions: the carboxylation of D-ribulose 1,5-bisphosphate, the primary event in carbon dioxide fixation, as well as the oxidative fragmentation of the pentose substrate in the photorespiration process. Both reactions occur simultaneously and in competition at the same active site. Although the small subunit is not catalytic it is essential for maximal activity. The protein is Ribulose bisphosphate carboxylase small subunit of Nostoc sp. (strain PCC 7120 / SAG 25.82 / UTEX 2576).